A 250-amino-acid polypeptide reads, in one-letter code: Ribonuclease PH (250 aa).

Phosphate-binding positions include Arg-87 and Gly-125–Arg-127.

This sequence belongs to the RNase PH family. In terms of assembly, homohexameric ring arranged as a trimer of dimers.

The enzyme catalyses tRNA(n+1) + phosphate = tRNA(n) + a ribonucleoside 5'-diphosphate. Its function is as follows. Phosphorolytic 3'-5' exoribonuclease that plays an important role in tRNA 3'-end maturation. Removes nucleotide residues following the 3'-CCA terminus of tRNAs; can also add nucleotides to the ends of RNA molecules by using nucleoside diphosphates as substrates, but this may not be physiologically important. Probably plays a role in initiation of 16S rRNA degradation (leading to ribosome degradation) during starvation. In Moorella thermoacetica (strain ATCC 39073 / JCM 9320), this protein is Ribonuclease PH.